We begin with the raw amino-acid sequence, 351 residues long: Ion-translocating oxidoreductase complex subunit D (351 aa).

Helical transmembrane passes span 18–38, 40–60, 87–107, and 121–141; these read IMLLVILACIPGIIAQTYFFG, GSLIQVMLAMITALLAEGAVL, LPPLAPWWMIVLGTLFAIVIA, and PAMVGYVVLLISFPVQMTSWL. The residue at position 185 (Thr185) is an FMN phosphoryl threonine. The next 5 helical transmembrane spans lie at 211 to 231, 241 to 261, 264 to 284, 298 to 318, and 321 to 341; these read VLAGLGWQWVNTGFLVGGLLL, IPVSFLLALGGCAAVSWMIAP, FASPMLHLFSGATMLGAFFIA, LIFGALIGILVWLIRVYGGYP, and VAFAVLLANITVPLIDHYTQP.

Belongs to the NqrB/RnfD family. As to quaternary structure, the complex is composed of six subunits: RnfA, RnfB, RnfC, RnfD, RnfE and RnfG. The cofactor is FMN.

The protein resides in the cell inner membrane. Its function is as follows. Part of a membrane-bound complex that couples electron transfer with translocation of ions across the membrane. In Yersinia pestis, this protein is Ion-translocating oxidoreductase complex subunit D.